We begin with the raw amino-acid sequence, 156 residues long: Small ribosomal subunit protein uS7 (156 aa).

This sequence belongs to the universal ribosomal protein uS7 family. Part of the 30S ribosomal subunit. Contacts proteins S9 and S11.

Its function is as follows. One of the primary rRNA binding proteins, it binds directly to 16S rRNA where it nucleates assembly of the head domain of the 30S subunit. Is located at the subunit interface close to the decoding center, probably blocks exit of the E-site tRNA. This is Small ribosomal subunit protein uS7 from Dichelobacter nodosus (strain VCS1703A).